The chain runs to 382 residues: Galactokinase (382 aa).

Residue 34–37 coordinates substrate; the sequence is EHTD. ATP is bound at residue 124 to 130; it reads GAGLSSS. Residues Ser-130 and Glu-162 each coordinate Mg(2+). Asp-174 acts as the Proton acceptor in catalysis. Tyr-223 contributes to the substrate binding site.

It belongs to the GHMP kinase family. GalK subfamily.

Its subcellular location is the cytoplasm. It carries out the reaction alpha-D-galactose + ATP = alpha-D-galactose 1-phosphate + ADP + H(+). It functions in the pathway carbohydrate metabolism; galactose metabolism. Functionally, catalyzes the transfer of the gamma-phosphate of ATP to D-galactose to form alpha-D-galactose-1-phosphate (Gal-1-P). The sequence is that of Galactokinase from Shigella boydii serotype 18 (strain CDC 3083-94 / BS512).